We begin with the raw amino-acid sequence, 215 residues long: Interleukin-12 subunit alpha (215 aa).

An N-terminal signal peptide occupies residues 1–22; the sequence is MCSSRCLLFLATLAFLIHLSLA. 3 disulfide bridges follow: cysteine 33–cysteine 106, cysteine 60–cysteine 192, and cysteine 81–cysteine 119. An N-linked (GlcNAc...) asparagine glycan is attached at asparagine 89.

It belongs to the IL-6 superfamily. As to quaternary structure, heterodimer with IL12B; disulfide-linked. This heterodimer is known as interleukin IL-12. Heterodimer with EBI3/IL27B; not disulfide-linked. This heterodimer is known as interleukin IL-35. Interacts with NBR1; this interaction promotes IL-12 secretion.

It is found in the secreted. Its function is as follows. Heterodimerizes with IL12B to form the IL-12 cytokine or with EBI3/IL27B to form the IL-35 cytokine. IL-12 is primarily produced by professional antigen-presenting cells (APCs) such as B-cells and dendritic cells (DCs) as well as macrophages and granulocytes and regulates T-cell and natural killer-cell responses, induces the production of interferon-gamma (IFN-gamma), favors the differentiation of T-helper 1 (Th1) cells and is an important link between innate resistance and adaptive immunity. Mechanistically, exerts its biological effects through a receptor composed of IL12R1 and IL12R2 subunits. Binding to the receptor results in the rapid tyrosine phosphorylation of a number of cellular substrates including the JAK family kinases TYK2 and JAK2. In turn, recruited STAT4 gets phosphorylated and translocates to the nucleus where it regulates cytokine/growth factor responsive genes. As part of IL-35, plays essential roles in maintaining the immune homeostasis of the liver microenvironment and also functions as an immune-suppressive cytokine. Mediates biological events through unconventional receptors composed of IL12RB2 and gp130/IL6ST heterodimers or homodimers. Signaling requires the transcription factors STAT1 and STAT4, which form a unique heterodimer that binds to distinct DNA sites. This chain is Interleukin-12 subunit alpha (IL12A), found in Sigmodon hispidus (Hispid cotton rat).